A 455-amino-acid polypeptide reads, in one-letter code: Ornithine decarboxylase (455 aa).

Lys-67 bears the N6-(pyridoxal phosphate)lysine mark. Pyridoxal 5'-phosphate-binding positions include Ser-197, Gly-234, and 271-274 (EPGR). Ser-297 carries the phosphoserine; by CK2 modification. 325–326 (YD) contacts substrate. The active-site Proton donor; shared with dimeric partner is the Cys-354. Position 354 is an S-nitrosocysteine (Cys-354). Asp-355 contributes to the substrate binding site. Tyr-383 is a binding site for pyridoxal 5'-phosphate.

This sequence belongs to the Orn/Lys/Arg decarboxylase class-II family. As to quaternary structure, homodimer. Only the dimer is catalytically active, as the active sites are constructed of residues from both monomers. Pyridoxal 5'-phosphate is required as a cofactor.

It carries out the reaction L-ornithine + H(+) = putrescine + CO2. It functions in the pathway amine and polyamine biosynthesis; putrescine biosynthesis via L-ornithine pathway; putrescine from L-ornithine: step 1/1. Inhibited by antizymes (AZs) OAZ1, OAZ2 and OAZ3 in response to polyamine levels. AZs inhibit the assembly of the functional homodimer by binding to ODC monomers. Additionally, OAZ1 targets ODC monomers for ubiquitin-independent proteolytic destruction by the 26S proteasome. Catalyzes the first and rate-limiting step of polyamine biosynthesis that converts ornithine into putrescine, which is the precursor for the polyamines, spermidine and spermine. Polyamines are essential for cell proliferation and are implicated in cellular processes, ranging from DNA replication to apoptosis. The polypeptide is Ornithine decarboxylase (ODC1) (Cricetulus griseus (Chinese hamster)).